Here is a 332-residue protein sequence, read N- to C-terminus: Thiosulfate-binding protein (332 aa).

An N-terminal signal peptide occupies residues methionine 1–alanine 22.

It belongs to the prokaryotic sulfate-binding protein family.

The protein resides in the periplasm. Functionally, binds thiosulfate specifically and with high affinity. Has no detectable affinity for sulfate. The polypeptide is Thiosulfate-binding protein (Pseudomonas aeruginosa (strain ATCC 15692 / DSM 22644 / CIP 104116 / JCM 14847 / LMG 12228 / 1C / PRS 101 / PAO1)).